Here is a 453-residue protein sequence, read N- to C-terminus: Bifunctional protein GlmU (453 aa).

Residues 1-225 are pyrophosphorylase; the sequence is MNIVILAAGT…EWETLGVNSK (225 aa). Residues 6 to 9, lysine 20, glutamine 71, 76 to 77, 98 to 100, glycine 135, glutamate 150, asparagine 165, and asparagine 223 contribute to the UDP-N-acetyl-alpha-D-glucosamine site; these read LAAG, GT, and YGD. Aspartate 100 is a Mg(2+) binding site. Residue asparagine 223 coordinates Mg(2+). Residues 226 to 246 form a linker region; it reads AQLAELERIHQRTIADALLVD. The interval 247-453 is N-acetyltransferase; the sequence is GVTLADPARV…GYVRPVKKKS (207 aa). Positions 329 and 347 each coordinate UDP-N-acetyl-alpha-D-glucosamine. The Proton acceptor role is filled by histidine 359. UDP-N-acetyl-alpha-D-glucosamine contacts are provided by tyrosine 362 and asparagine 373. Acetyl-CoA is bound by residues alanine 376, 382-383, serine 401, and alanine 419; that span reads NY.

It in the N-terminal section; belongs to the N-acetylglucosamine-1-phosphate uridyltransferase family. The protein in the C-terminal section; belongs to the transferase hexapeptide repeat family. In terms of assembly, homotrimer. Mg(2+) is required as a cofactor.

It is found in the cytoplasm. The catalysed reaction is alpha-D-glucosamine 1-phosphate + acetyl-CoA = N-acetyl-alpha-D-glucosamine 1-phosphate + CoA + H(+). It carries out the reaction N-acetyl-alpha-D-glucosamine 1-phosphate + UTP + H(+) = UDP-N-acetyl-alpha-D-glucosamine + diphosphate. The protein operates within nucleotide-sugar biosynthesis; UDP-N-acetyl-alpha-D-glucosamine biosynthesis; N-acetyl-alpha-D-glucosamine 1-phosphate from alpha-D-glucosamine 6-phosphate (route II): step 2/2. Its pathway is nucleotide-sugar biosynthesis; UDP-N-acetyl-alpha-D-glucosamine biosynthesis; UDP-N-acetyl-alpha-D-glucosamine from N-acetyl-alpha-D-glucosamine 1-phosphate: step 1/1. It participates in bacterial outer membrane biogenesis; LPS lipid A biosynthesis. Functionally, catalyzes the last two sequential reactions in the de novo biosynthetic pathway for UDP-N-acetylglucosamine (UDP-GlcNAc). The C-terminal domain catalyzes the transfer of acetyl group from acetyl coenzyme A to glucosamine-1-phosphate (GlcN-1-P) to produce N-acetylglucosamine-1-phosphate (GlcNAc-1-P), which is converted into UDP-GlcNAc by the transfer of uridine 5-monophosphate (from uridine 5-triphosphate), a reaction catalyzed by the N-terminal domain. This chain is Bifunctional protein GlmU, found in Burkholderia ambifaria (strain MC40-6).